A 333-amino-acid chain; its full sequence is Fructose-1,6-bisphosphatase class 1 (333 aa).

Residues glutamate 90, aspartate 113, leucine 115, and aspartate 116 each contribute to the Mg(2+) site. Substrate is bound by residues 116–119 (DGSS), asparagine 209, tyrosine 242, and lysine 272. Glutamate 278 serves as a coordination point for Mg(2+).

It belongs to the FBPase class 1 family. As to quaternary structure, homotetramer. Mg(2+) serves as cofactor.

It localises to the cytoplasm. It catalyses the reaction beta-D-fructose 1,6-bisphosphate + H2O = beta-D-fructose 6-phosphate + phosphate. It participates in carbohydrate biosynthesis; gluconeogenesis. This Pasteurella multocida (strain Pm70) protein is Fructose-1,6-bisphosphatase class 1.